The primary structure comprises 358 residues: Alternative oxidase, mitochondrial (358 aa).

Residues 152–172 (LIRYVFLESVAGVPGMVAGML) traverse the membrane as a helical segment. Positions 159, 198, and 201 each coordinate Fe cation. Residues 218–238 (MILGAQGVFFNSFFLCYLFSP) form a helical membrane-spanning segment. Glu-249, Glu-306, and His-309 together coordinate Fe cation.

This sequence belongs to the alternative oxidase family. Fe cation is required as a cofactor.

Its subcellular location is the mitochondrion inner membrane. Catalyzes cyanide-resistant oxygen consumption. May increase respiration when the cytochrome respiratory pathway is restricted, or in response to low temperatures. This Monilinia fructicola (Brown rot fungus) protein is Alternative oxidase, mitochondrial (AOX1).